Reading from the N-terminus, the 102-residue chain is Hemoglobin subunit beta-Z (102 aa).

One can recognise a Globin domain in the interval 1–102 (FGNLSSAQAI…VANALSHKYH (102 aa)). The heme b site is built by histidine 19 and histidine 48.

The protein belongs to the globin family. In terms of assembly, heterotetramer of two alpha chains and two beta chains.

This is an embryonic beta chain. The chain is Hemoglobin subunit beta-Z (HBBZ) from Mesocricetus auratus (Golden hamster).